The primary structure comprises 450 residues: tRNA-2-methylthio-N(6)-dimethylallyladenosine synthase (450 aa).

Positions 7-127 (KKVFIKTYGC…LPDVLARVRG (121 aa)) constitute an MTTase N-terminal domain. [4Fe-4S] cluster-binding residues include C16, C52, C90, C168, C172, and C175. Positions 154–388 (IKRGVTAFLT…LLLKQQQGFG (235 aa)) constitute a Radical SAM core domain. The 62-residue stretch at 389–450 (SSLVGSTIDT…GYNSLFAELA (62 aa)) folds into the TRAM domain.

This sequence belongs to the methylthiotransferase family. MiaB subfamily. In terms of assembly, monomer. [4Fe-4S] cluster serves as cofactor.

Its subcellular location is the cytoplasm. The catalysed reaction is N(6)-dimethylallyladenosine(37) in tRNA + (sulfur carrier)-SH + AH2 + 2 S-adenosyl-L-methionine = 2-methylsulfanyl-N(6)-dimethylallyladenosine(37) in tRNA + (sulfur carrier)-H + 5'-deoxyadenosine + L-methionine + A + S-adenosyl-L-homocysteine + 2 H(+). In terms of biological role, catalyzes the methylthiolation of N6-(dimethylallyl)adenosine (i(6)A), leading to the formation of 2-methylthio-N6-(dimethylallyl)adenosine (ms(2)i(6)A) at position 37 in tRNAs that read codons beginning with uridine. The chain is tRNA-2-methylthio-N(6)-dimethylallyladenosine synthase from Mesorhizobium japonicum (strain LMG 29417 / CECT 9101 / MAFF 303099) (Mesorhizobium loti (strain MAFF 303099)).